A 232-amino-acid polypeptide reads, in one-letter code: Probable intron-encoded endonuclease aI3 (232 aa).

Belongs to the LAGLIDADG endonuclease family.

The protein localises to the mitochondrion. Mitochondrial DNA endonuclease involved in intron homing. This is Probable intron-encoded endonuclease aI3 (aI3) from Dictyostelium discoideum (Social amoeba).